Here is a 299-residue protein sequence, read N- to C-terminus: GTPase Era (299 aa).

The Era-type G domain occupies 4–171; the sequence is KSGFVAILGR…IKLLTDNLEE (168 aa). The interval 12-19 is G1; that stretch reads GRPNVGKS. 12–19 contributes to the GTP binding site; that stretch reads GRPNVGKS. Positions 38 to 42 are G2; the sequence is QTTRN. The tract at residues 59-62 is G3; that stretch reads DTPG. Residues 59-63 and 121-124 contribute to the GTP site; these read DTPGI and NKID. The segment at 121 to 124 is G4; that stretch reads NKID. The tract at residues 150–152 is G5; it reads ISA. The region spanning 202-280 is the KH type-2 domain; sequence TQQEVPHSVA…YLETWVKVKK (79 aa).

Belongs to the TRAFAC class TrmE-Era-EngA-EngB-Septin-like GTPase superfamily. Era GTPase family. As to quaternary structure, monomer.

It is found in the cytoplasm. The protein resides in the cell membrane. An essential GTPase that binds both GDP and GTP, with rapid nucleotide exchange. Plays a role in 16S rRNA processing and 30S ribosomal subunit biogenesis and possibly also in cell cycle regulation and energy metabolism. This Streptococcus agalactiae serotype III (strain NEM316) protein is GTPase Era.